The sequence spans 467 residues: Hydroxymethylglutaryl-CoA synthase erg13A (467 aa).

Residue Ala35 coordinates (3S)-3-hydroxy-3-methylglutaryl-CoA. Glu86 serves as the catalytic Proton donor/acceptor. (3S)-3-hydroxy-3-methylglutaryl-CoA-binding residues include Cys118, Thr160, Ser209, His259, Lys268, Asn334, and Ser368. Cys118 serves as the catalytic Acyl-thioester intermediate. The Proton donor/acceptor role is filled by His259.

It belongs to the thiolase-like superfamily. HMG-CoA synthase family.

It catalyses the reaction acetoacetyl-CoA + acetyl-CoA + H2O = (3S)-3-hydroxy-3-methylglutaryl-CoA + CoA + H(+). The protein operates within metabolic intermediate biosynthesis; (R)-mevalonate biosynthesis; (R)-mevalonate from acetyl-CoA: step 2/3. In terms of biological role, hydroxymethylglutaryl-CoA synthase; part of the first module of ergosterol biosynthesis pathway that includes the early steps of the pathway, conserved across all eukaryotes, and which results in the formation of mevalonate from acetyl-coenzyme A (acetyl-CoA). Erg13A and erg13B condense acetyl-CoA with acetoacetyl-CoA to form hydroxymethylglutaryl-CoA (HMG-CoA). The first module starts with the action of the cytosolic acetyl-CoA acetyltransferase erg10B that catalyzes the formation of acetoacetyl-CoA. The hydroxymethylglutaryl-CoA synthases erg13A and erg13B then condense acetyl-CoA with acetoacetyl-CoA to form HMG-CoA. The rate-limiting step of the early module is the reduction to mevalonate by the 3-hydroxy-3-methylglutaryl-coenzyme A (HMG-CoA) reductases hmg1 and hmg2. Mevalonate is also a precursor for the extracellular siderophore triacetylfusarinine C (TAFC). This chain is Hydroxymethylglutaryl-CoA synthase erg13A, found in Aspergillus fumigatus (strain ATCC MYA-4609 / CBS 101355 / FGSC A1100 / Af293) (Neosartorya fumigata).